The sequence spans 466 residues: Cysteine--tRNA ligase (466 aa).

Cys-28 serves as a coordination point for Zn(2+). Positions 30 to 40 match the 'HIGH' region motif; it reads PTVYNYIHIGN. Positions 208, 233, and 237 each coordinate Zn(2+). Residues 265–269 carry the 'KMSKS' region motif; it reads KMSKS. Lys-268 contributes to the ATP binding site.

The protein belongs to the class-I aminoacyl-tRNA synthetase family. As to quaternary structure, monomer. Zn(2+) is required as a cofactor.

The protein localises to the cytoplasm. It carries out the reaction tRNA(Cys) + L-cysteine + ATP = L-cysteinyl-tRNA(Cys) + AMP + diphosphate. This is Cysteine--tRNA ligase from Staphylococcus aureus (strain bovine RF122 / ET3-1).